The chain runs to 318 residues: Olfactory receptor-like protein COR3 (318 aa).

The Extracellular segment spans residues 1–26 (MASGNCTTPTTFILSGLTDNPGLQMP). Asparagine 5 is a glycosylation site (N-linked (GlcNAc...) asparagine). Residues 27 to 49 (LFMVFLAIYTITLLTNLGLIRLI) traverse the membrane as a helical segment. Residues 50–57 (SVDLHLQT) are Cytoplasmic-facing. A helical membrane pass occupies residues 58-79 (PMYIFLQNLSFTDAAYSTVITP). The Extracellular segment spans residues 80–100 (KMLATFLEERKTISYVGCILQ). Cysteine 97 and cysteine 179 are disulfide-bonded. Residues 101 to 120 (YFSFVLLTTSECLLLAVMAY) traverse the membrane as a helical segment. Topologically, residues 121 to 139 (DRYVAICKPLLYPAIMTKA) are cytoplasmic. The helical transmembrane segment at 140–164 (VCWRLVESLYFLAFLNSLVHTCGLL) threads the bilayer. Over 165–205 (KLSFCYSNVVNHFFCDISPLFQISSSSIAISELLVIISGSL) the chain is Extracellular. Residues 206 to 226 (FVMSSIIIILISYVFIILTVV) traverse the membrane as a helical segment. At 227 to 239 (MIRSKDGKYKAFS) the chain is on the cytoplasmic side. A helical membrane pass occupies residues 240–260 (TCTSHLMAVSLFHGTVIFMYL). Over 261 to 271 (RPVKLFSLDTD) the chain is Extracellular. A helical membrane pass occupies residues 272–292 (KIASLFYTVVIPMLNPLIYSW). At 293–318 (RNKEVKDALRRLTATTFGFIDSKAVQ) the chain is on the cytoplasmic side.

Belongs to the G-protein coupled receptor 1 family.

It localises to the cell membrane. Its function is as follows. Odorant receptor. This Gallus gallus (Chicken) protein is Olfactory receptor-like protein COR3 (COR3).